Here is a 160-residue protein sequence, read N- to C-terminus: Protein Bel-3 (160 aa).

In terms of assembly, homodimer.

It is found in the host cytoplasm. This Human spumaretrovirus (SFVcpz(hu)) protein is Protein Bel-3 (bel3).